A 442-amino-acid polypeptide reads, in one-letter code: 6-phospho-alpha-glucosidase 1 (442 aa).

An NAD(+)-binding site is contributed by Phe-6–Asp-72. Residues Arg-95 and Asn-149 each contribute to the substrate site. Cys-171 serves as a coordination point for Mn(2+). Catalysis depends on Asp-172, which acts as the Proton donor. Mn(2+) is bound at residue His-202. The Proton acceptor role is filled by Tyr-265. Arg-285 serves as a coordination point for substrate.

It belongs to the glycosyl hydrolase 4 family. As to quaternary structure, homodimer. May also form homotetramer. Mn(2+) serves as cofactor. Co(2+) is required as a cofactor. It depends on Ni(2+) as a cofactor. Requires Fe(2+) as cofactor. The cofactor is Mg(2+). NAD(+) serves as cofactor.

It carries out the reaction alpha-maltose 6'-phosphate + H2O = D-glucose 6-phosphate + D-glucose. Its activity is regulated as follows. Is inhibited by EDTA in vitro. Is probably involved in the catabolism of alpha-glycosides accumulated via a phosphoenolpyruvate-dependent phosphotransferase system (PEP-PTS). Hydrolyzes a wide variety of 6-phospho-alpha-D-glucosides including the five isomeric derivatives of sucrose, i.e. trehalulose-6'-phosphate, turanose-6'-phosphate, maltulose-6'-phosphate, leucrose-6'-phosphate, and palatinose-6'-phosphate, but is not active on sucrose-6-phosphate. Can also hydrolyze maltose-6'-phosphate and methyl-alpha-glucose-6-phosphate, and poorly, trehalose-6-phosphate. Fails to hydrolyze beta-O-linked phosphorylated disaccharides such as cellobiose-6'-phosphate and gentiobiose-6'-phosphate. Does not seem to be involved in maltose catabolism. In Lacticaseibacillus paracasei (strain ATCC 334 / BCRC 17002 / CCUG 31169 / CIP 107868 / KCTC 3260 / NRRL B-441) (Lactobacillus paracasei), this protein is 6-phospho-alpha-glucosidase 1 (simA).